The sequence spans 146 residues: VQWSAEEKQLISGLWGKVNVADCGAEALARLLIVYPWTQRFFASFGNLSSPTAILGNPMVRAHGKKVLTSFGDAVKNLDNIKNTFAQLSELHCDKLHVDPENFRLLGDILIIVLAAHFTKEFTPECQAAWQKLVRVVAHALARKYH.

Residues Q2 to H146 form the Globin domain. Residues H63 and H92 each coordinate heme b.

The protein belongs to the globin family. Heterotetramer of two alpha chains and two beta chains. Red blood cells.

Its function is as follows. Involved in oxygen transport from the lung to the various peripheral tissues. This chain is Hemoglobin subunit beta (HBB), found in Struthio camelus (Common ostrich).